Consider the following 213-residue polypeptide: MSLSPYELEQEWQPRTYVGRLVKEGRIRSLSEIFEKNLPILEPEIVDYLIGPELKSETVDVRLVQKMTDAGRINRFRVVVVIGNENGFVGVGQGKARQLAVAIEKAIRNAKLNIIPVRRGCGSWECLCSEPHSVPFTVRGKSGSVEVILKPAPRGTGLVAGDAAKVVLRLAGIRDVWSFTKGDTRTTINFVKATYNALKQTYKFVTPLDWART.

Residues 54–117 form the S5 DRBM domain; that stretch reads LKSETVDVRL…RNAKLNIIPV (64 aa).

It belongs to the universal ribosomal protein uS5 family. In terms of assembly, part of the 30S ribosomal subunit. Contacts protein S4.

Functionally, with S4 and S12 plays an important role in translational accuracy. This is Small ribosomal subunit protein uS5 from Hyperthermus butylicus (strain DSM 5456 / JCM 9403 / PLM1-5).